The following is a 718-amino-acid chain: MCASVKSNIRGPALIPRMKTKHRIYYVTLFSIVLLGLIATGMFQFWPHSIESSSDGGVEKRSIREVPVVRLPTDSPIPERGDLSCRMHTCFDVYRCGFNPKNKIKVYIYPLKKYVDDAGVPVSSAISREYNELLTAISDSDYYTDDINRACLFVPSIDVLNQNPLRIKETAQALAQLSRWDRGTNHLLFNMLPGAPPDYNTALDVPRDRALLAGGGFSTWTYRQGYDVSIPVFSPLSAEMALPEKAPGPRRYFLLSSQMAIHPEYREELEALQAKHQESVLVLDKCTNLSEGVLSVRKRCHQHQVFDYPQVLQEATFCTVLRGARLGQAVLSDVLQAGCVPVVIADSYILPFSEVLDWKRASVVVPEEKMSDVYSILQNIPQRQIEEMQRQARWFWEAYFQSIKAIALATLQIINDRIYPYAAISYEEWNDPPAVKWASVSNPLFLPLIPPQSQGFTAIVLTYDRVESLFRVITEVSKVPSLSKLLVVWNNQNKNPPEESLWPKIRVPLKVVRTAENKLSNRFFPYDEIETEAVLAIDDDIIMLTSDELQFGYEVWREFPDRLVGYPGRLHLWDHEMNKWKYESEWTNEVSMVLTGAAFYHKYFNYLYTYKMPGDIKNWVDTHMNCEDIAMNFLVANVTGKAVIKVTPRKKFKCPECTAIDGLSLDQTHMVERSECINKFASVFGTMPLKVVEHRADPVLYKDDFPEKLKSFPNIGSL.

Topologically, residues 1 to 25 are cytoplasmic; it reads MCASVKSNIRGPALIPRMKTKHRIY. Residues 26 to 46 form a helical; Signal-anchor for type II membrane protein membrane-spanning segment; it reads YVTLFSIVLLGLIATGMFQFW. Residues 47–718 are Lumenal-facing; sequence PHSIESSSDG…LKSFPNIGSL (672 aa). 4 cysteine pairs are disulfide-bonded: C85-C90, C96-C151, C286-C300, and C318-C339. The N-linked (GlcNAc...) asparagine glycan is linked to N288. UDP-binding residues include L461, R465, N490, and N517. 7 residues coordinate UDP-N-acetyl-alpha-D-glucosamine: R465, N490, N517, R522, D538, D539, and D540. UDP is bound by residues D538 and D539. Position 540 (D540) interacts with Mn(2+). The a protein site is built by Y582 and S584. Residues C626 and C676 are joined by a disulfide bond. UDP-N-acetyl-alpha-D-glucosamine is bound by residues E627 and D628. N637 carries an N-linked (GlcNAc...) asparagine glycan. The a protein site is built by K651 and K653. Residue R673 coordinates UDP-N-acetyl-alpha-D-glucosamine.

It belongs to the glycosyltransferase 47 family. In terms of assembly, part of the heparan sulfate polymerase, a dimeric complex composed of EXT1 and EXT2. Could also form homooligomeric complexes. Interacts with NDST1. Interacts with GALNT5. It depends on Mn(2+) as a cofactor. Post-translationally, N-glycosylated at Asn-637. In terms of processing, a soluble form is generated by proteolytic processing. Expressed in heart, brain, spleen, lung, liver, skeletal muscle and testis. Heart shows a high expression.

The protein resides in the golgi apparatus membrane. The protein localises to the golgi apparatus. Its subcellular location is the cis-Golgi network membrane. It is found in the endoplasmic reticulum membrane. It localises to the secreted. It catalyses the reaction 3-O-{[(1-&gt;4)-beta-D-GlcA-(1-&gt;4)-alpha-D-GlcNAc](n)-(1-&gt;4)-beta-D-GlcA-(1-&gt;3)-beta-D-Gal-(1-&gt;3)-beta-D-Gal-(1-&gt;4)-beta-D-Xyl}-L-seryl-[protein] + UDP-N-acetyl-alpha-D-glucosamine = 3-O-{alpha-D-GlcNAc-[(1-&gt;4)-beta-D-GlcA-(1-&gt;4)-alpha-D-GlcNAc](n)-(1-&gt;4)-beta-D-GlcA-(1-&gt;3)-beta-D-Gal-(1-&gt;3)-beta-D-Gal-(1-&gt;4)-beta-D-Xyl}-L-seryl-[protein] + UDP + H(+). The protein operates within protein modification; protein glycosylation. Functionally, glycosyltransferase forming with EXT1 the heterodimeric heparan sulfate polymerase which catalyzes the elongation of the heparan sulfate glycan backbone. Glycan backbone extension consists in the alternating transfer of (1-&gt;4)-beta-D-GlcA and (1-&gt;4)-alpha-D-GlcNAc residues from their respective UDP-sugar donors. Both EXT1 and EXT2 are required for the full activity of the polymerase since EXT1 bears the N-acetylglucosaminyl-proteoglycan 4-beta-glucuronosyltransferase activity within the complex while EXT2 carries the glucuronosyl-N-acetylglucosaminyl-proteoglycan 4-alpha-N-acetylglucosaminyltransferase activity. Heparan sulfate proteoglycans are ubiquitous components of the extracellular matrix and play an important role in tissue homeostasis and signaling. The chain is Exostosin-2 from Mus musculus (Mouse).